A 217-amino-acid polypeptide reads, in one-letter code: ATP-dependent Clp protease proteolytic subunit 2 (217 aa).

Ser113 acts as the Nucleophile in catalysis. His138 is an active-site residue.

The protein belongs to the peptidase S14 family. In terms of assembly, fourteen ClpP subunits assemble into 2 heptameric rings which stack back to back to give a disk-like structure with a central cavity, resembling the structure of eukaryotic proteasomes.

It is found in the cytoplasm. It catalyses the reaction Hydrolysis of proteins to small peptides in the presence of ATP and magnesium. alpha-casein is the usual test substrate. In the absence of ATP, only oligopeptides shorter than five residues are hydrolyzed (such as succinyl-Leu-Tyr-|-NHMec, and Leu-Tyr-Leu-|-Tyr-Trp, in which cleavage of the -Tyr-|-Leu- and -Tyr-|-Trp bonds also occurs).. Its function is as follows. Cleaves peptides in various proteins in a process that requires ATP hydrolysis. Has a chymotrypsin-like activity. Plays a major role in the degradation of misfolded proteins. This chain is ATP-dependent Clp protease proteolytic subunit 2, found in Frankia casuarinae (strain DSM 45818 / CECT 9043 / HFP020203 / CcI3).